The sequence spans 573 residues: Ribonuclease J (573 aa).

A disordered region spans residues 1–29; the sequence is MENQERKPRRRRRRRPQEGSQGGPQDHVE. Zn(2+) is bound by residues histidine 93, histidine 95, aspartate 97, histidine 98, histidine 168, and aspartate 190. Residues 259–261 and 390–394 each bind substrate; these read ASH and HASGH. Histidine 416 contributes to the Zn(2+) binding site.

This sequence belongs to the metallo-beta-lactamase superfamily. RNA-metabolizing metallo-beta-lactamase-like family. Bacterial RNase J subfamily. As to quaternary structure, homodimer. May be a subunit of the RNA degradosome. It depends on Zn(2+) as a cofactor.

It is found in the cytoplasm. An RNase that has endonuclease and possibly 5'-3' exonuclease activity. Probably involved in maturation of rRNA and in some organisms also mRNA maturation and/or decay. This is Ribonuclease J from Thermus thermophilus (strain ATCC BAA-163 / DSM 7039 / HB27).